The following is a 309-amino-acid chain: Low density lipoprotein receptor adapter protein 1-B (309 aa).

One can recognise a PID domain in the interval 41–195; it reads LLEGMLFHLK…SDGEGASSSQ (155 aa). The disordered stretch occupies residues 179–201; that stretch reads DKREKSGSDGEGASSSQSDGSSS. Residues 189–201 show a composition bias toward low complexity; the sequence is EGASSSQSDGSSS. A Clathrin box motif is present at residues 213–217; it reads LLDFE. The tract at residues 250-277 is AP-2 complex binding; it reads WELDDGLDEAFARLAESRTNPQVLDIGL. A [DE]-X(1,2)-F-X-X-[FL]-X-X-X-R motif motif is present at residues 258–267; the sequence is EAFARLAESR.

In terms of assembly, interacts (via PID domain) with ldlr (via NPXY motif). Binds to soluble clathrin trimers and to the adapter protein complex 2 (AP-2, beta 2 subunit). Binds to phosphoinositides, which regulate clathrin bud assembly at the cell surface. Interacts with the VLDL receptor (vldlr). Interacts with the vitellogenin receptor. In terms of tissue distribution, expressed at high level during oogenesis and embryogenesis. Found at low level in the adult liver and spleen. Found at very low level in testis and heart. Not found in the oocyte vegetal cortex.

The protein resides in the cytoplasm. Functionally, adapter protein (clathrin-associated sorting protein (CLASP)) required for efficient endocytosis of the LDL receptor (LDLR). Also involved in the vitellogenin receptor mediated endocytosis of nutrients during oogenesis. The chain is Low density lipoprotein receptor adapter protein 1-B from Xenopus laevis (African clawed frog).